A 211-amino-acid polypeptide reads, in one-letter code: Imidazole glycerol phosphate synthase subunit HisH (211 aa).

The Glutamine amidotransferase type-1 domain occupies 5–211; the sequence is SVALLDYGSG…QLLRNWVDSL (207 aa). The active-site Nucleophile is C83. Active-site residues include H192 and E194.

Heterodimer of HisH and HisF.

It is found in the cytoplasm. The enzyme catalyses 5-[(5-phospho-1-deoxy-D-ribulos-1-ylimino)methylamino]-1-(5-phospho-beta-D-ribosyl)imidazole-4-carboxamide + L-glutamine = D-erythro-1-(imidazol-4-yl)glycerol 3-phosphate + 5-amino-1-(5-phospho-beta-D-ribosyl)imidazole-4-carboxamide + L-glutamate + H(+). It carries out the reaction L-glutamine + H2O = L-glutamate + NH4(+). It functions in the pathway amino-acid biosynthesis; L-histidine biosynthesis; L-histidine from 5-phospho-alpha-D-ribose 1-diphosphate: step 5/9. Functionally, IGPS catalyzes the conversion of PRFAR and glutamine to IGP, AICAR and glutamate. The HisH subunit catalyzes the hydrolysis of glutamine to glutamate and ammonia as part of the synthesis of IGP and AICAR. The resulting ammonia molecule is channeled to the active site of HisF. This chain is Imidazole glycerol phosphate synthase subunit HisH, found in Nocardia farcinica (strain IFM 10152).